The following is a 326-amino-acid chain: Probable fructokinase-4 (326 aa).

This sequence belongs to the carbohydrate kinase PfkB family.

It carries out the reaction D-fructose + ATP = D-fructose 6-phosphate + ADP + H(+). It participates in glycan biosynthesis; starch biosynthesis. Its function is as follows. May play an important role in maintaining the flux of carbon towards starch formation. This is Probable fructokinase-4 from Arabidopsis thaliana (Mouse-ear cress).